The primary structure comprises 145 residues: Transcriptional regulator SlyA (145 aa).

One can recognise an HTH marR-type domain in the interval 2–135 (ELPLGSDLAR…LALLVSRLEK (134 aa)). A DNA-binding region (H-T-H motif) is located at residues 49–72 (QIQLAKAIGIEQPSLVRTLDQLEE).

Belongs to the SlyA family. Homodimer.

Its function is as follows. Transcription regulator that can specifically activate or repress expression of target genes. Regulates genes involved in production of antibiotic and exoenzyme virulence determinants in the phytopathogen. Required for the expression of the virulence protein evf during Drosophila melanogaster infection. The polypeptide is Transcriptional regulator SlyA (Pectobacterium carotovorum subsp. carotovorum (Erwinia carotovora subsp. carotovora)).